A 486-amino-acid chain; its full sequence is Malonate-semialdehyde dehydrogenase (486 aa).

NAD(+)-binding residues include phenylalanine 154, lysine 178, glutamate 181, arginine 182, and serine 231. Cysteine 286 acts as the Nucleophile in catalysis. Glutamate 386 is an NAD(+) binding site.

The protein belongs to the aldehyde dehydrogenase family. IolA subfamily. Homotetramer.

The enzyme catalyses 3-oxopropanoate + NAD(+) + CoA + H2O = hydrogencarbonate + acetyl-CoA + NADH + H(+). It catalyses the reaction 2-methyl-3-oxopropanoate + NAD(+) + CoA + H2O = propanoyl-CoA + hydrogencarbonate + NADH + H(+). Its pathway is polyol metabolism; myo-inositol degradation into acetyl-CoA; acetyl-CoA from myo-inositol: step 7/7. Functionally, catalyzes the oxidation of malonate semialdehyde (MSA) and methylmalonate semialdehyde (MMSA) into acetyl-CoA and propanoyl-CoA, respectively. Is involved in a myo-inositol catabolic pathway. Bicarbonate, and not CO2, is the end-product of the enzymatic reaction. This is Malonate-semialdehyde dehydrogenase from Bacillus cereus (strain ATCC 14579 / DSM 31 / CCUG 7414 / JCM 2152 / NBRC 15305 / NCIMB 9373 / NCTC 2599 / NRRL B-3711).